Reading from the N-terminus, the 231-residue chain is MASRRVLLKLSGESFGGGAPLVDPDVVSAIASEIVRVSKTIQIAIVVGGGNYFRGAELSRRGMARDRADYMGMLGTVINALALQDFLEQAGGDTRVQSAISMSQVAELYVPRRAERHLTKGRVVIFAAGAGMPYFSTDTVAVQRALEIKADIVLIAKNGVDGVYTDDPQINPNAKKIYKITYREALERGLRVVDSAALGLCMEHGLPMRVFGMESLRDAVSGLKVGTELSQ.

Residue 9–12 (KLSG) coordinates ATP. Residue Gly-49 participates in UMP binding. ATP-binding residues include Gly-50 and Arg-54. UMP is bound by residues Asp-69 and 130 to 137 (AGMPYFST). 3 residues coordinate ATP: Asn-158, Tyr-164, and Asp-167.

It belongs to the UMP kinase family. In terms of assembly, homohexamer.

Its subcellular location is the cytoplasm. It carries out the reaction UMP + ATP = UDP + ADP. Its pathway is pyrimidine metabolism; CTP biosynthesis via de novo pathway; UDP from UMP (UMPK route): step 1/1. Its activity is regulated as follows. Inhibited by UTP. Functionally, catalyzes the reversible phosphorylation of UMP to UDP. This Tropheryma whipplei (strain Twist) (Whipple's bacillus) protein is Uridylate kinase.